Here is a 207-residue protein sequence, read N- to C-terminus: MSYSGERDNLAPHMALVPMVIEQTSRGERSFDIYSRLLKERVIFLTGQVEDHMANLIVAQMLFLEAENPEKDIYLYINSPGGVITAGISIYDTMQFIKPDVSTICMGQAASMGAFLLTAGAKGKRFCLPNSRVMIHQPLGGYQGQATDIEIHAREILKVKGRMNELMAHHTGQSLEQIERDTERDRFLSAPEAVEYGLVDSILTHRN.

A propeptide spanning residues 1–14 (MSYSGERDNLAPHM) is cleaved from the precursor. Ser111 functions as the Nucleophile in the catalytic mechanism. His136 is a catalytic residue.

It belongs to the peptidase S14 family. Fourteen ClpP subunits assemble into 2 heptameric rings which stack back to back to give a disk-like structure with a central cavity, resembling the structure of eukaryotic proteasomes. Component of the ClpAP and ClpXP complexes.

Its subcellular location is the cytoplasm. The catalysed reaction is Hydrolysis of proteins to small peptides in the presence of ATP and magnesium. alpha-casein is the usual test substrate. In the absence of ATP, only oligopeptides shorter than five residues are hydrolyzed (such as succinyl-Leu-Tyr-|-NHMec, and Leu-Tyr-Leu-|-Tyr-Trp, in which cleavage of the -Tyr-|-Leu- and -Tyr-|-Trp bonds also occurs).. In terms of biological role, cleaves peptides in various proteins in a process that requires ATP hydrolysis. Has a chymotrypsin-like activity. Plays a major role in the degradation of misfolded proteins. The polypeptide is ATP-dependent Clp protease proteolytic subunit (Salmonella paratyphi A (strain ATCC 9150 / SARB42)).